The following is a 172-amino-acid chain: Cytidylate kinase (172 aa).

7–15 contributes to the ATP binding site; the sequence is GLAGTGTTT.

The protein belongs to the cytidylate kinase family. Type 2 subfamily.

It is found in the cytoplasm. The enzyme catalyses CMP + ATP = CDP + ADP. It carries out the reaction dCMP + ATP = dCDP + ADP. The chain is Cytidylate kinase from Methanobrevibacter smithii (strain ATCC 35061 / DSM 861 / OCM 144 / PS).